We begin with the raw amino-acid sequence, 494 residues long: Ell-associated factor Eaf (494 aa).

Residues lysine 119 to methionine 138 are compositionally biased toward polar residues. Disordered regions lie at residues lysine 119–histidine 212 and glutamine 243–aspartate 494. Residues serine 139–glycine 156 show a composition bias toward low complexity. The span at glutamate 159–asparagine 178 shows a compositional bias: polar residues. Serine 188 bears the Phosphoserine mark. Composition is skewed to polar residues over residues glutamine 243 to glycine 256 and glutamine 280 to alanine 306. Over residues glutamine 307–glutamine 319 the composition is skewed to low complexity. The segment covering arginine 320 to methionine 332 has biased composition (polar residues). The span at glutamine 344–serine 373 shows a compositional bias: low complexity. Positions aspartate 374–glutamate 389 are enriched in acidic residues. Positions histidine 414–proline 424 are enriched in low complexity. Residues serine 437–glutamine 454 show a composition bias toward basic residues. Composition is skewed to low complexity over residues glutamine 455–serine 464 and asparagine 475–serine 488.

The protein belongs to the EAF family.

The protein localises to the nucleus. Promotes transcriptional elongation by Su(Tpl)/ELL. Essential for development. The chain is Ell-associated factor Eaf from Drosophila virilis (Fruit fly).